The chain runs to 130 residues: Astrocytic phosphoprotein PEA-15 (130 aa).

The region spanning 3–81 is the DED domain; sequence EYGTLLQDLT…RPDLLTMVVD (79 aa). Ser61 and Ser90 each carry phosphoserine. Positions 98–107 are microtubule-binding; it reads KLTRIPSAKK. Ser104 carries the post-translational modification Phosphoserine; by PKC. Ser116 is subject to Phosphoserine; by CaMK2. The microtubule-binding stretch occupies residues 122 to 129; it reads KLAPPPKK.

Binds RPS6KA3, MAPK3 and MAPK1. Interacts with CASP8 and FADD. Transient interaction with PLD1 and PLD2. Phosphorylated by protein kinase C and calcium-calmodulin-dependent protein kinase. These phosphorylation events are modulated by neurotransmitters or hormones. In terms of tissue distribution, predominantly expressed in the brain. Low levels in some peripheral organs.

The protein resides in the cytoplasm. In terms of biological role, blocks Ras-mediated inhibition of integrin activation and modulates the ERK MAP kinase cascade. Inhibits RPS6KA3 activities by retaining it in the cytoplasm. Inhibits both TNFRSF6- and TNFRSF1A-mediated CASP8 activity and apoptosis. Regulates glucose transport by controlling both the content of SLC2A1 glucose transporters on the plasma membrane and the insulin-dependent trafficking of SLC2A4 from the cell interior to the surface. In Mus musculus (Mouse), this protein is Astrocytic phosphoprotein PEA-15 (Pea15).